Here is a 796-residue protein sequence, read N- to C-terminus: Nuclear GTPase SLIP-GC (796 aa).

Residue Gly-107–Ser-114 participates in GTP binding. Coiled-coil stretches lie at residues Ser-158–Asp-185 and Gly-742–Ser-776.

The protein localises to the nucleus speckle. Nuclear GTPase found in germinal center B-cells, where it may inhibit function of the activation-induced cytidine deaminase AICDA. Reduces somatic hypermutation in B-cells which may enhance genome stability. This is Nuclear GTPase SLIP-GC from Mus musculus (Mouse).